The chain runs to 405 residues: Aspartokinase (405 aa).

An ATP-binding site is contributed by 7 to 10 (KYGG). 25–30 (RIAHYR) contacts substrate. Serine 41 is an ATP binding site. Substrate-binding positions include 47 to 49 (TDE), glutamate 74, 125 to 126 (LE), 150 to 153 (RGGS), and serine 153. Residues 173-174 (TD), 179-184 (YTTDPH), and arginine 209 each bind ATP. 2 ACT domains span residues 263-342 (IGLI…IAKV) and 344-405 (IVGV…LDKA). Substrate-binding positions include aspartate 270, 288–290 (AVD), glutamine 294, 355–356 (VP), 369–370 (NI), and 376–377 (SE).

This sequence belongs to the aspartokinase family. Tetramer consisting of 2 isoforms Alpha (catalytic and regulation) and of a homodimer of 2 isoforms Beta (regulation).

The enzyme catalyses L-aspartate + ATP = 4-phospho-L-aspartate + ADP. Its pathway is amino-acid biosynthesis; L-lysine biosynthesis via DAP pathway; (S)-tetrahydrodipicolinate from L-aspartate: step 1/4. The protein operates within amino-acid biosynthesis; L-methionine biosynthesis via de novo pathway; L-homoserine from L-aspartate: step 1/3. It functions in the pathway amino-acid biosynthesis; L-threonine biosynthesis; L-threonine from L-aspartate: step 1/5. Functionally, catalyzes the phosphorylation of the beta-carboxyl group of aspartic acid with ATP to yield 4-phospho-L-aspartate, which is involved in the branched biosynthetic pathway leading to the biosynthesis of amino acids lysine, threonine, isoleucine and methionine. This chain is Aspartokinase (ask), found in Thermus thermophilus (strain ATCC BAA-163 / DSM 7039 / HB27).